The sequence spans 414 residues: Peptide chain release factor subunit 1 (414 aa).

The protein belongs to the eukaryotic release factor 1 family. As to quaternary structure, heterodimer of two subunits, one of which binds GTP.

The protein resides in the cytoplasm. Its function is as follows. Directs the termination of nascent peptide synthesis (translation) in response to the termination codons UAA, UAG and UGA. This chain is Peptide chain release factor subunit 1 (prf1), found in Pyrococcus abyssi (strain GE5 / Orsay).